We begin with the raw amino-acid sequence, 262 residues long: Succinate dehydrogenase [ubiquinone] iron-sulfur subunit (262 aa).

A 2Fe-2S ferredoxin-type domain is found at Lys-21 to Pro-110. Residues Cys-73, Cys-78, Cys-81, and Cys-93 each contribute to the [2Fe-2S] cluster site. Residues Asp-154–Tyr-184 form the 4Fe-4S ferredoxin-type domain. The [4Fe-4S] cluster site is built by Cys-164, Cys-167, and Cys-170. Cys-174 is a binding site for [3Fe-4S] cluster. Residue Trp-179 participates in a ubiquinone binding. [3Fe-4S] cluster contacts are provided by Cys-221 and Cys-227. [4Fe-4S] cluster is bound at residue Cys-231.

It belongs to the succinate dehydrogenase/fumarate reductase iron-sulfur protein family. Component of complex II composed of four subunits: a flavoprotein (FP), an iron-sulfur protein (IP), and a cytochrome b composed of a large and a small subunit. Requires [2Fe-2S] cluster as cofactor. [3Fe-4S] cluster serves as cofactor. The cofactor is [4Fe-4S] cluster.

The protein localises to the mitochondrion inner membrane. The catalysed reaction is a quinone + succinate = fumarate + a quinol. It functions in the pathway carbohydrate metabolism; tricarboxylic acid cycle; fumarate from succinate (eukaryal route): step 1/1. In terms of biological role, iron-sulfur protein (IP) subunit of succinate dehydrogenase (SDH) that is involved in complex II of the mitochondrial electron transport chain and is responsible for transferring electrons from succinate to ubiquinone (coenzyme Q). The polypeptide is Succinate dehydrogenase [ubiquinone] iron-sulfur subunit (SDH2) (Cyanidium caldarium (Red alga)).